The primary structure comprises 229 residues: Ribosomal RNA small subunit methyltransferase G (229 aa).

Residues G87, L92, 138 to 139 (VE), and R154 contribute to the S-adenosyl-L-methionine site.

This sequence belongs to the methyltransferase superfamily. RNA methyltransferase RsmG family.

It localises to the cytoplasm. The catalysed reaction is guanosine(527) in 16S rRNA + S-adenosyl-L-methionine = N(7)-methylguanosine(527) in 16S rRNA + S-adenosyl-L-homocysteine. Functionally, specifically methylates the N7 position of guanine in position 527 of 16S rRNA. The polypeptide is Ribosomal RNA small subunit methyltransferase G (Oleidesulfovibrio alaskensis (strain ATCC BAA-1058 / DSM 17464 / G20) (Desulfovibrio alaskensis)).